Here is a 613-residue protein sequence, read N- to C-terminus: Proton myo-inositol cotransporter hmit-1.2 (613 aa).

At Met-1–Lys-21 the chain is on the cytoplasmic side. Residues Leu-22–Tyr-42 traverse the membrane as a helical segment. The Extracellular segment spans residues Asp-43–Glu-69. A helical membrane pass occupies residues Val-70 to Ser-90. Topologically, residues Asp-91–Lys-96 are cytoplasmic. A helical membrane pass occupies residues Pro-97 to Trp-117. Topologically, residues Thr-118 to Lys-119 are extracellular. Residues Ile-120 to Val-140 form a helical membrane-spanning segment. Residues Pro-141–Val-157 lie on the Cytoplasmic side of the membrane. Residues Ser-158 to Phe-178 form a helical membrane-spanning segment. The Extracellular portion of the chain corresponds to Ser-179–Arg-189. The chain crosses the membrane as a helical span at residues Leu-190–Pro-210. Over Glu-211–Lys-279 the chain is Cytoplasmic. The helical transmembrane segment at Ala-280–Leu-300 threads the bilayer. Residues Tyr-301 to Thr-317 lie on the Extracellular side of the membrane. Residues Ile-318 to Phe-338 form a helical membrane-spanning segment. Residues Phe-339–Lys-347 are Cytoplasmic-facing. The helical transmembrane segment at Leu-348 to Leu-368 threads the bilayer. The Extracellular segment spans residues Leu-369–Thr-472. Asn-372, Asn-451, and Asn-456 each carry an N-linked (GlcNAc...) asparagine glycan. A helical membrane pass occupies residues Ile-473 to Leu-493. Over Pro-494 to Thr-515 the chain is Cytoplasmic. The helical transmembrane segment at Leu-516–Ile-536 threads the bilayer. The Extracellular portion of the chain corresponds to Thr-537–Tyr-539. The helical transmembrane segment at Gly-540–Val-560 threads the bilayer. Topologically, residues Pro-561–Met-613 are cytoplasmic. A disordered region spans residues Ala-594–Met-613. Positions Ser-602–Met-613 are enriched in polar residues.

Belongs to the major facilitator superfamily. Sugar transporter (TC 2.A.1.1) family. In terms of tissue distribution, expressed in the excretory canal cell and in pairs of amphid and sheath glia.

The protein resides in the cell membrane. It is found in the perikaryon. It carries out the reaction myo-inositol(out) + H(+)(out) = myo-inositol(in) + H(+)(in). In terms of biological role, h(+)-myo-inositol cotransporter. Probably by promoting the transport of myo-inositol regulates intracellular osmosis in response to hyperosmotic stress. The polypeptide is Proton myo-inositol cotransporter hmit-1.2 (Caenorhabditis elegans).